The primary structure comprises 219 residues: 3-dehydroquinate dehydratase (219 aa).

3-dehydroquinate contacts are provided by residues 28-30 (ELR) and Arg-61. Residue His-116 is the Proton donor/acceptor of the active site. Lys-142 (schiff-base intermediate with substrate) is an active-site residue. 2 residues coordinate 3-dehydroquinate: Arg-180 and Gln-203.

It belongs to the type-I 3-dehydroquinase family. As to quaternary structure, homodimer.

It carries out the reaction 3-dehydroquinate = 3-dehydroshikimate + H2O. It participates in metabolic intermediate biosynthesis; chorismate biosynthesis; chorismate from D-erythrose 4-phosphate and phosphoenolpyruvate: step 3/7. Functionally, involved in the third step of the chorismate pathway, which leads to the biosynthesis of aromatic amino acids. Catalyzes the cis-dehydration of 3-dehydroquinate (DHQ) and introduces the first double bond of the aromatic ring to yield 3-dehydroshikimate. The polypeptide is 3-dehydroquinate dehydratase (Aquifex aeolicus (strain VF5)).